We begin with the raw amino-acid sequence, 204 residues long: Probable carboxysome shell protein CsoS1E (204 aa).

3 stretches are compositionally biased toward low complexity: residues 1–14, 41–84, and 92–102; these read MPKP…DSPS, SAST…AAGS, and GGAIKPPASSS. The segment at 1-102 is disordered; the sequence is MPKPSSSSSS…GAIKPPASSS (102 aa). The BMC domain maps to 111–196; the sequence is ALGMIETRGM…PHQEVEPALR (86 aa).

Belongs to the bacterial microcompartments protein family. In terms of assembly, homohexamer.

Its subcellular location is the carboxysome. A probable carboxysomal shell protein found only in Prochlorococcus and Synechococcus strains that grow in low light. The chain is Probable carboxysome shell protein CsoS1E from Prochlorococcus marinus (strain MIT 9313).